The primary structure comprises 490 residues: Angiopoietin-related protein 1 (490 aa).

An N-terminal signal peptide occupies residues 1–22 (MKAFVWTLSVLLFLLGSGHCKG). A coiled-coil region spans residues 79 to 167 (ITRMDLENLK…LNVTTEMLKM (89 aa)). 2 N-linked (GlcNAc...) asparagine glycosylation sites follow: Asn-159 and Asn-187. One can recognise a Fibrinogen C-terminal domain in the interval 270 to 490 (FINEGPFKDC…AVQMMIKPID (221 aa)). 2 cysteine pairs are disulfide-bonded: Cys-279/Cys-308 and Cys-431/Cys-444.

It localises to the secreted. The sequence is that of Angiopoietin-related protein 1 (Angptl1) from Mus musculus (Mouse).